Consider the following 266-residue polypeptide: uncharacterized protein (266 aa).

Residues 12-28 traverse the membrane as a helical segment; sequence ILAAGLAIGCAGGYYAY. Positions 40 to 140 constitute an FAD-binding FR-type domain; the sequence is EIYAPFTVNK…RGPFKTTKLD (101 aa).

It belongs to the flavoprotein pyridine nucleotide cytochrome reductase family. The cofactor is FAD.

It is found in the mitochondrion outer membrane. This is an uncharacterized protein from Schizosaccharomyces pombe (strain 972 / ATCC 24843) (Fission yeast).